The sequence spans 301 residues: Large ribosomal subunit protein uL4 (301 aa).

A large ribosomal subunit protein uL4 region spans residues 1-223; sequence MNETKTIDVL…TQALSAQPEV (223 aa). The interval 49-105 is disordered; sequence QGTHATKTRGQVSGGGKKPWRQKGTGRARQGSTRAPQWVGGGTVHGPQPRSYAQRTP. The interval 224–301 is unknown; sequence PETNVADQHP…KSDSEKEDAK (78 aa).

Belongs to the universal ribosomal protein uL4 family. Part of the 50S ribosomal subunit.

Functionally, one of the primary rRNA binding proteins, this protein initially binds near the 5'-end of the 23S rRNA. It is important during the early stages of 50S assembly. It makes multiple contacts with different domains of the 23S rRNA in the assembled 50S subunit and ribosome. Forms part of the polypeptide exit tunnel. This Cutibacterium acnes (strain DSM 16379 / KPA171202) (Propionibacterium acnes) protein is Large ribosomal subunit protein uL4.